The primary structure comprises 243 residues: Type III pantothenate kinase (243 aa).

7–14 (DLGNSRFK) contacts ATP. Residues tyrosine 91 and 98–101 (GVDR) each bind substrate. Aspartate 100 (proton acceptor) is an active-site residue. Threonine 122 contributes to the ATP binding site. Residue threonine 172 coordinates substrate.

It belongs to the type III pantothenate kinase family. In terms of assembly, homodimer. NH4(+) is required as a cofactor. The cofactor is K(+).

The protein resides in the cytoplasm. The catalysed reaction is (R)-pantothenate + ATP = (R)-4'-phosphopantothenate + ADP + H(+). It functions in the pathway cofactor biosynthesis; coenzyme A biosynthesis; CoA from (R)-pantothenate: step 1/5. Catalyzes the phosphorylation of pantothenate (Pan), the first step in CoA biosynthesis. The chain is Type III pantothenate kinase from Stenotrophomonas maltophilia (strain K279a).